A 453-amino-acid chain; its full sequence is Ribulose bisphosphate carboxylase large chain (453 aa).

A propeptide spanning residues 1–2 (MS) is cleaved from the precursor. Proline 3 carries the N-acetylproline modification. N6,N6,N6-trimethyllysine is present on lysine 14. Substrate-binding residues include asparagine 123 and threonine 173. Lysine 175 serves as the catalytic Proton acceptor. Lysine 177 serves as a coordination point for substrate. Lysine 201, aspartate 203, and glutamate 204 together coordinate Mg(2+). N6-carboxylysine is present on lysine 201. Histidine 294 functions as the Proton acceptor in the catalytic mechanism. Arginine 295, histidine 327, and serine 379 together coordinate substrate.

The protein belongs to the RuBisCO large chain family. Type I subfamily. As to quaternary structure, heterohexadecamer of 8 large chains and 8 small chains; disulfide-linked. The disulfide link is formed within the large subunit homodimers. It depends on Mg(2+) as a cofactor. The disulfide bond which can form in the large chain dimeric partners within the hexadecamer appears to be associated with oxidative stress and protein turnover.

Its subcellular location is the plastid. It localises to the chloroplast. It catalyses the reaction 2 (2R)-3-phosphoglycerate + 2 H(+) = D-ribulose 1,5-bisphosphate + CO2 + H2O. The enzyme catalyses D-ribulose 1,5-bisphosphate + O2 = 2-phosphoglycolate + (2R)-3-phosphoglycerate + 2 H(+). In terms of biological role, ruBisCO catalyzes two reactions: the carboxylation of D-ribulose 1,5-bisphosphate, the primary event in carbon dioxide fixation, as well as the oxidative fragmentation of the pentose substrate in the photorespiration process. Both reactions occur simultaneously and in competition at the same active site. In Hydnophytum formicarum (Ant plant), this protein is Ribulose bisphosphate carboxylase large chain.